Consider the following 176-residue polypeptide: 2-C-methyl-D-erythritol 2,4-cyclodiphosphate synthase (176 aa).

The a divalent metal cation site is built by aspartate 23, histidine 25, and histidine 60. 4-CDP-2-C-methyl-D-erythritol 2-phosphate is bound at residue 23–25; that stretch reads DSH. 149-152 is a binding site for 4-CDP-2-C-methyl-D-erythritol 2-phosphate; that stretch reads TSGE.

Belongs to the IspF family. As to quaternary structure, homotrimer. A divalent metal cation serves as cofactor.

The enzyme catalyses 4-CDP-2-C-methyl-D-erythritol 2-phosphate = 2-C-methyl-D-erythritol 2,4-cyclic diphosphate + CMP. It functions in the pathway isoprenoid biosynthesis; isopentenyl diphosphate biosynthesis via DXP pathway; isopentenyl diphosphate from 1-deoxy-D-xylulose 5-phosphate: step 4/6. In terms of biological role, involved in the biosynthesis of isopentenyl diphosphate (IPP) and dimethylallyl diphosphate (DMAPP), two major building blocks of isoprenoid compounds. Catalyzes the conversion of 4-diphosphocytidyl-2-C-methyl-D-erythritol 2-phosphate (CDP-ME2P) to 2-C-methyl-D-erythritol 2,4-cyclodiphosphate (ME-CPP) with a corresponding release of cytidine 5-monophosphate (CMP). The polypeptide is 2-C-methyl-D-erythritol 2,4-cyclodiphosphate synthase (Chlamydia felis (strain Fe/C-56) (Chlamydophila felis)).